We begin with the raw amino-acid sequence, 146 residues long: Large ribosomal subunit protein uL15 (146 aa).

Residues 1–13 (MKLHELKAAEGSR) show a composition bias toward basic and acidic residues. The disordered stretch occupies residues 1-51 (MKLHELKAAEGSRKVRNRVGRGTSSGNGKTSGRGQKGQKARSGGGVRLGFE). Composition is skewed to gly residues over residues 23–35 (TSSG…GRGQ) and 42–51 (SGGGVRLGFE).

This sequence belongs to the universal ribosomal protein uL15 family. In terms of assembly, part of the 50S ribosomal subunit.

In terms of biological role, binds to the 23S rRNA. The sequence is that of Large ribosomal subunit protein uL15 from Streptococcus pyogenes serotype M1.